The following is a 220-amino-acid chain: Large ribosomal subunit protein bL21c (220 aa).

This sequence belongs to the bacterial ribosomal protein bL21 family. In terms of assembly, part of the 50S ribosomal subunit.

The protein localises to the plastid. It localises to the chloroplast. Functionally, this protein binds to 23S ribosomal RNA in the presence of protein L20. The sequence is that of Large ribosomal subunit protein bL21c (RPL21) from Arabidopsis thaliana (Mouse-ear cress).